The following is a 74-amino-acid chain: Mitochondrial import receptor subunit TOM6 homolog (74 aa).

Low complexity predominate over residues 1–14 (MASSGAGVTAAGSA). The interval 1 to 24 (MASSGAGVTAAGSANEAPEIPDNV) is disordered. Position 2 is an N-acetylalanine (Ala2).

Belongs to the Tom6 family. As to quaternary structure, forms part of the preprotein translocase complex of the outer mitochondrial membrane (TOM complex) which consists of at least 7 different proteins (TOMM5, TOMM6, TOMM7, TOMM20, TOMM22, TOMM40 and TOMM70).

The protein localises to the mitochondrion outer membrane. This Bos taurus (Bovine) protein is Mitochondrial import receptor subunit TOM6 homolog (TOMM6).